The following is a 517-amino-acid chain: Anthranilate--CoA ligase (517 aa).

161–172 (LQYTSGSTGAPK) contacts AMP.

It belongs to the ATP-dependent AMP-binding enzyme family. As to quaternary structure, monomer.

The enzyme catalyses anthranilate + ATP + CoA = anthraniloyl-CoA + AMP + diphosphate. In terms of biological role, catalyzes the formation of anthraniloyl-CoA, which is the priming step for entry into the Pseudomonas quinolone signal (PQS) biosynthetic pathway. Also active on a variety of aromatic substrates, including benzoate and chloro and fluoro derivatives of anthranilate. The sequence is that of Anthranilate--CoA ligase (pqsA) from Pseudomonas aeruginosa (strain ATCC 15692 / DSM 22644 / CIP 104116 / JCM 14847 / LMG 12228 / 1C / PRS 101 / PAO1).